A 502-amino-acid chain; its full sequence is Mannitol 2-dehydrogenase (502 aa).

Residue 35–46 (IVHVGVGGFHRA) coordinates NAD(+).

The protein belongs to the mannitol dehydrogenase family. As to quaternary structure, monomer.

It carries out the reaction D-mannitol + NAD(+) = D-fructose + NADH + H(+). Its function is as follows. Catalyzes the NAD(H)-dependent interconversion of D-fructose and D-mannitol in the mannitol metabolic pathway. The protein is Mannitol 2-dehydrogenase of Pyricularia oryzae (strain 70-15 / ATCC MYA-4617 / FGSC 8958) (Rice blast fungus).